Reading from the N-terminus, the 546-residue chain is Glucose-6-phosphate isomerase (546 aa).

The active-site Proton donor is the Glu-357. Active-site residues include His-389 and Lys-509.

It belongs to the GPI family.

It is found in the cytoplasm. It carries out the reaction alpha-D-glucose 6-phosphate = beta-D-fructose 6-phosphate. It functions in the pathway carbohydrate biosynthesis; gluconeogenesis. It participates in carbohydrate degradation; glycolysis; D-glyceraldehyde 3-phosphate and glycerone phosphate from D-glucose: step 2/4. Functionally, catalyzes the reversible isomerization of glucose-6-phosphate to fructose-6-phosphate. In Anaeromyxobacter dehalogenans (strain 2CP-1 / ATCC BAA-258), this protein is Glucose-6-phosphate isomerase.